The primary structure comprises 123 residues: Small ribosomal subunit protein uS12 (123 aa).

The disordered stretch occupies residues 1–31; that stretch reads MPTINQLIRKPREAQKARDKAPALQASPQKR. A compositionally biased stretch (basic and acidic residues) spans 10–21; it reads KPREAQKARDKA. Asp-89 carries the post-translational modification 3-methylthioaspartic acid.

Belongs to the universal ribosomal protein uS12 family. Part of the 30S ribosomal subunit. Contacts proteins S8 and S17. May interact with IF1 in the 30S initiation complex.

Functionally, with S4 and S5 plays an important role in translational accuracy. Interacts with and stabilizes bases of the 16S rRNA that are involved in tRNA selection in the A site and with the mRNA backbone. Located at the interface of the 30S and 50S subunits, it traverses the body of the 30S subunit contacting proteins on the other side and probably holding the rRNA structure together. The combined cluster of proteins S8, S12 and S17 appears to hold together the shoulder and platform of the 30S subunit. The polypeptide is Small ribosomal subunit protein uS12 (Xanthobacter autotrophicus (strain ATCC BAA-1158 / Py2)).